Here is a 404-residue protein sequence, read N- to C-terminus: MRPVVADPASDAVFWPEGFTLAGINCGIKPTSKDLMLMLCDEPASTASVFTTNLCCAAPVELSKAALSASGGKMRAVICNSGNANAATGAAGMQNARLMAESTAQAFDLNAGEVLVASTGVIGQQLPVEKIAGAMPSLKATSGSTQWCDAAEAIMTTDTFPKAFGVDVKLSGGTARIAGIAKGSGMICPNMATMLAFLGTDATIEPALLQELLAAANAVSFNAITVDGDTSTNDMAAIMASGKGPEVLRGSDNARLFGEALRSVMTMLAQLIIVDGEGATKFVELRVTGAKSNEEARMAAMTVANSPLVKTAIHGEDANWGRIIAAAGRSGASFVQEELSVYFDDEPILKPGLDANFSEERAKEVMSKEEFTITLSLGKGAGRATVWTCDLSHGYIEINGSYRS.

6 residues coordinate substrate: threonine 156, lysine 182, threonine 193, glutamate 277, asparagine 399, and serine 404. Residue threonine 193 is the Nucleophile of the active site.

It belongs to the ArgJ family. In terms of assembly, heterotetramer of two alpha and two beta chains.

The protein localises to the cytoplasm. The enzyme catalyses N(2)-acetyl-L-ornithine + L-glutamate = N-acetyl-L-glutamate + L-ornithine. It carries out the reaction L-glutamate + acetyl-CoA = N-acetyl-L-glutamate + CoA + H(+). It functions in the pathway amino-acid biosynthesis; L-arginine biosynthesis; L-ornithine and N-acetyl-L-glutamate from L-glutamate and N(2)-acetyl-L-ornithine (cyclic): step 1/1. It participates in amino-acid biosynthesis; L-arginine biosynthesis; N(2)-acetyl-L-ornithine from L-glutamate: step 1/4. In terms of biological role, catalyzes two activities which are involved in the cyclic version of arginine biosynthesis: the synthesis of N-acetylglutamate from glutamate and acetyl-CoA as the acetyl donor, and of ornithine by transacetylation between N(2)-acetylornithine and glutamate. This chain is Arginine biosynthesis bifunctional protein ArgJ, found in Chlorobaculum tepidum (strain ATCC 49652 / DSM 12025 / NBRC 103806 / TLS) (Chlorobium tepidum).